Here is a 63-residue protein sequence, read N- to C-terminus: Small integral membrane protein 43 (63 aa).

Important for interaction with SLC2A1 and SLC2A3 stretches follow at residues 7-29 and 51-57; these read LLLY…FVVI and HREPWGF. Residues 9-29 traverse the membrane as a helical segment; sequence LYLALFFFLLFLLFLLLFVVI.

In terms of assembly, interacts with glucose transporters SLC2A1/GLUT1 and SLC2A3/GLUT3; the interactions may promote SLC2A1- and SLC2A3-mediated glucose transport to meet the energy needs of mesendoderm differentiation.

The protein localises to the cell membrane. Required for mesendoderm differentiation. Interacts with glucose transporters and promotes glucose uptake. Probably augments the glucose uptake capacity of glucose transporter proteins to meet the energy needs of mesendoderm differentiation. The polypeptide is Small integral membrane protein 43 (Homo sapiens (Human)).